A 590-amino-acid polypeptide reads, in one-letter code: MCGILAVLGCSDDSQAKRVRVLELSRRLKHRGPDWSGLCQHGDCFLSHQRLAIIDPASGDQPLYNEDKSIVVTVNGEIYNHEELRRRLPDHKYRTGSDCEVIAHLYEEHGEDFVDMLDGMFSFVLLDTRNNCFVAARDAVGITPLYIGWGLDGSVWLSSEMKGLNDDCEHFEVFPPGNLYSSRSGSFRRWYNPQWYNETIPSAPYDPLVLRKAFEDAVIKRLMTDVPFGVLLSGGLDSSLVAAVTARHLAGSKAAEQWGTQLHSFCVGLEGSPDLKAAKEVAEYLGTVHHEFHFTVQDGIDAIEDVIFHIETYDVTTIRASTPMFLMARKIKSLGVKMVISGEGSDEIFGGYLYFHKAPNKEEFHHETCRKIKALHQYDCLRANKATSAWGLEARVPFLDKEFMDVAMSIDPESKMIKPDLGRIEKWVLRKAFDDEENPYLPKHILYRQKEQFSDGVGYSWIDGLKAHAAKHVTDRMMLNAARIYPHNTPTTKEAYYYRMIFERFFPQNSARFTVPGGPSIACSTAKAIEWDARWSNNLDPSGRAALGVHDSAYDPPLPSSISAGKGAAMITNKKPRIVDVATPGVVIST.

The active-site For GATase activity is Cys-2. The 184-residue stretch at 2–185 (CGILAVLGCS…PGNLYSSRSG (184 aa)) folds into the Glutamine amidotransferase type-2 domain. Residues 50-54 (RLAII), 75-77 (NGE), and Asp-98 contribute to the L-glutamine site. The 324-residue stretch at 193-516 (PQWYNETIPS…PQNSARFTVP (324 aa)) folds into the Asparagine synthetase domain. ATP contacts are provided by residues Leu-231, Val-267, and 341-342 (SG).

It catalyses the reaction L-aspartate + L-glutamine + ATP + H2O = L-asparagine + L-glutamate + AMP + diphosphate + H(+). The protein operates within amino-acid biosynthesis; L-asparagine biosynthesis; L-asparagine from L-aspartate (L-Gln route): step 1/1. This chain is Asparagine synthetase [glutamine-hydrolyzing], found in Asparagus officinalis (Garden asparagus).